A 440-amino-acid polypeptide reads, in one-letter code: Deoxyguanosinetriphosphate triphosphohydrolase-like protein (440 aa).

Positions 62–255 (RLTHSLEAAQ…MELADDIAYG (194 aa)) constitute an HD domain.

The protein belongs to the dGTPase family. Type 2 subfamily.

The protein is Deoxyguanosinetriphosphate triphosphohydrolase-like protein of Vibrio parahaemolyticus serotype O3:K6 (strain RIMD 2210633).